The primary structure comprises 444 residues: Squalene synthase ERG9 (444 aa).

The helical transmembrane segment at 421 to 441 (FNMVLSIILSVLLGFYYIYTL) threads the bilayer.

It belongs to the phytoene/squalene synthase family. The cofactor is Mg(2+).

Its subcellular location is the endoplasmic reticulum membrane. It is found in the microsome. The catalysed reaction is 2 (2E,6E)-farnesyl diphosphate + NADPH + H(+) = squalene + 2 diphosphate + NADP(+). It carries out the reaction 2 (2E,6E)-farnesyl diphosphate + NADH + H(+) = squalene + 2 diphosphate + NAD(+). It participates in terpene metabolism; lanosterol biosynthesis; lanosterol from farnesyl diphosphate: step 1/3. Its function is as follows. Squalene synthase; part of the third module of ergosterol biosynthesis pathway that includes the late steps of the pathway. ERG9 produces squalene from 2 farnesyl pyrophosphate moieties. The third module or late pathway involves the ergosterol synthesis itself through consecutive reactions that mainly occur in the endoplasmic reticulum (ER) membrane. Firstly, the squalene synthase ERG9 catalyzes the condensation of 2 farnesyl pyrophosphate moieties to form squalene, which is the precursor of all steroids. Squalene synthase is crucial for balancing the incorporation of farnesyl diphosphate (FPP) into sterol and nonsterol isoprene synthesis. Secondly, the squalene epoxidase ERG1 catalyzes the stereospecific oxidation of squalene to (S)-2,3-epoxysqualene, which is considered to be a rate-limiting enzyme in steroid biosynthesis. Then, the lanosterol synthase ERG7 catalyzes the cyclization of (S)-2,3 oxidosqualene to lanosterol, a reaction that forms the sterol core. In the next steps, lanosterol is transformed to zymosterol through a complex process involving various demethylation, reduction and desaturation reactions. The lanosterol 14-alpha-demethylase ERG11 (also known as CYP51) catalyzes C14-demethylation of lanosterol to produce 4,4'-dimethyl cholesta-8,14,24-triene-3-beta-ol, which is critical for ergosterol biosynthesis. The C-14 reductase ERG24 reduces the C14=C15 double bond of 4,4-dimethyl-cholesta-8,14,24-trienol to produce 4,4-dimethyl-cholesta-8,24-dienol. 4,4-dimethyl-cholesta-8,24-dienol is substrate of the C-4 demethylation complex ERG25-ERG26-ERG27 in which ERG25 catalyzes the three-step monooxygenation required for the demethylation of 4,4-dimethyl and 4alpha-methylsterols, ERG26 catalyzes the oxidative decarboxylation that results in a reduction of the 3-beta-hydroxy group at the C-3 carbon to an oxo group, and ERG27 is responsible for the reduction of the keto group on the C-3. ERG28 has a role as a scaffold to help anchor ERG25, ERG26 and ERG27 to the endoplasmic reticulum and ERG29 regulates the activity of the iron-containing C4-methylsterol oxidase ERG25. Then, the sterol 24-C-methyltransferase ERG6 catalyzes the methyl transfer from S-adenosyl-methionine to the C-24 of zymosterol to form fecosterol. The C-8 sterol isomerase ERG2 catalyzes the reaction which results in unsaturation at C-7 in the B ring of sterols and thus converts fecosterol to episterol. The sterol-C5-desaturase ERG3 then catalyzes the introduction of a C-5 double bond in the B ring to produce 5-dehydroepisterol. The C-22 sterol desaturase ERG5 further converts 5-dehydroepisterol into ergosta-5,7,22,24(28)-tetraen-3beta-ol by forming the C-22(23) double bond in the sterol side chain. Finally, ergosta-5,7,22,24(28)-tetraen-3beta-ol is substrate of the C-24(28) sterol reductase ERG4 to produce ergosterol. The protein is Squalene synthase ERG9 of Saccharomyces cerevisiae (strain ATCC 204508 / S288c) (Baker's yeast).